The chain runs to 406 residues: Argininosuccinate synthase (406 aa).

Residues 11-19 (AYSGGLDTS) and alanine 38 contribute to the ATP site. 2 residues coordinate L-citrulline: tyrosine 91 and serine 96. Glycine 121 lines the ATP pocket. 3 residues coordinate L-aspartate: threonine 123, asparagine 127, and aspartate 128. Asparagine 127 contacts L-citrulline. L-citrulline-binding residues include arginine 131, serine 182, serine 191, glutamate 267, and tyrosine 279.

It belongs to the argininosuccinate synthase family. Type 1 subfamily. In terms of assembly, homotetramer.

The protein localises to the cytoplasm. The enzyme catalyses L-citrulline + L-aspartate + ATP = 2-(N(omega)-L-arginino)succinate + AMP + diphosphate + H(+). The protein operates within amino-acid biosynthesis; L-arginine biosynthesis; L-arginine from L-ornithine and carbamoyl phosphate: step 2/3. This Rhodospirillum centenum (strain ATCC 51521 / SW) protein is Argininosuccinate synthase.